We begin with the raw amino-acid sequence, 655 residues long: Ankyrin repeat and SAM domain-containing protein 3 (655 aa).

The interaction with NEK7 stretch occupies residues 1–421 (MSELSDEASE…PGSEPQTEKS (421 aa)). 2 positions are modified to phosphoserine: Ser2 and Ser5. ANK repeat units lie at residues 34–64 (DVPL…DLNK), 68–97 (GGWT…SVNV), 101–130 (EGQT…ELEM), 134–163 (HGWT…NANV), 168–197 (YGYT…KVDT), and 201–220 (SGAT…IVAL). Position 96 is a 3-hydroxyasparagine (Asn96). Ser201, Ser225, Ser243, Ser244, and Ser245 each carry phosphoserine. Residues 314–426 (YRDVTSPINE…QTEKSPYSGP (113 aa)) are disordered. Position 318 is a phosphothreonine (Thr318). Ser319, Ser366, Ser369, and Ser373 each carry phosphoserine. Positions 378–395 (KSSVRKQTRSYLKNKSRH) are enriched in basic residues. Positions 424–487 (SGPQDLATLL…TSAIARWHSS (64 aa)) constitute an SAM domain. Residues 500 to 575 (ADRLETEMQE…AALVLDQLRA (76 aa)) are a coiled coil. Ser540 bears the Phosphoserine mark.

In terms of assembly, homooligomer. Interacts (via SAM domain) with ANKS6 (via SAM domain). Interacts with BICC1. Interacts with NPHP1. Interacts with NEK8. Interacts with HIF1AN. Interacts with NEK7; this interaction alters the subcellular distribution of NEK7 by preventing its nuclear translocation. In terms of processing, hydroxylated at Asn-96, most probably by HIF1AN. Post-translationally, phosphorylations at Ser-5, Ser-225, Thr-318, Ser-319, Ser-366 and Ser-369 occur in a NEK7-dependent manner. Polyubiquitinated. In terms of tissue distribution, kidney (at protein level).

The protein localises to the cell projection. It is found in the cilium. Its subcellular location is the cytoplasm. May be involved in vasopressin signaling in the kidney. In Mus musculus (Mouse), this protein is Ankyrin repeat and SAM domain-containing protein 3 (Anks3).